The sequence spans 64 residues: Large ribosomal subunit protein bL35 (64 aa).

2 stretches are compositionally biased toward basic residues: residues 1–26 (MPKM…KRSK) and 33–44 (LTKKSPKRKRKL). The interval 1–44 (MPKMKTHRGAAKRFKKTGTGKIKRSKAYTSHILTKKSPKRKRKL) is disordered.

Belongs to the bacterial ribosomal protein bL35 family.

In Alkaliphilus oremlandii (strain OhILAs) (Clostridium oremlandii (strain OhILAs)), this protein is Large ribosomal subunit protein bL35.